Reading from the N-terminus, the 223-residue chain is Voltage-dependent calcium channel gamma-1 subunit (223 aa).

Topologically, residues 1–10 are cytoplasmic; it reads MSQTKTAKVR. A helical transmembrane segment spans residues 11 to 29; that stretch reads VTLFFILAGGVLAMVAVVT. At 30-109 the chain is on the extracellular side; it reads DHWAVLSPHL…TQKEYSISAA (80 aa). Residues asparagine 43 and asparagine 80 are each glycosylated (N-linked (GlcNAc...) asparagine). Cysteine 57 and cysteine 81 are joined by a disulfide. Residues 110–130 traverse the membrane as a helical segment; the sequence is AIAIFSLGFIIIGSICAFLSF. Topologically, residues 131-135 are cytoplasmic; that stretch reads GNKRD. Residues 136 to 156 form a helical membrane-spanning segment; that stretch reads YLLRPASMFYAFAGLCLIVSV. Topologically, residues 157–180 are extracellular; sequence EVMRQSVKRMIDSEDTVWIEYYYS. The helical transmembrane segment at 181–205 threads the bilayer; sequence WSFACACAGFTLLFLGGLFLLLFSL. Over 206–223 the chain is Cytoplasmic; that stretch reads PRMPQNPWESCMDTESEH.

The protein belongs to the PMP-22/EMP/MP20 family. CACNG subfamily. Component of a calcium channel complex consisting of a pore-forming alpha subunit (CACNA1S) and the ancillary subunits CACNB1 or CACNB2, CACNG1 and CACNA2D1. The channel complex contains alpha, beta, gamma and delta subunits in a 1:1:1:1 ratio, i.e. it contains either CACNB1 or CACNB2. N-glycosylated. Skeletal muscle.

It localises to the cell membrane. The protein resides in the sarcolemma. In terms of biological role, regulatory subunit of the voltage-gated calcium channel that gives rise to L-type calcium currents in skeletal muscle. Regulates channel inactivation kinetics. This Rattus norvegicus (Rat) protein is Voltage-dependent calcium channel gamma-1 subunit (Cacng1).